The sequence spans 583 residues: Membrane-bound O-acyltransferase gup1 (583 aa).

The Extracellular segment spans residues 1–52 (MLRLFRFDVLETSTKDTERPNSKSSRLSSTSGSSHPSSSSRLTVRSAVPEKS). A disordered region spans residues 15-42 (KDTERPNSKSSRLSSTSGSSHPSSSSRL). A compositionally biased stretch (low complexity) spans 22-40 (SKSSRLSSTSGSSHPSSSS). Residues 53 to 73 (AFGSIEFIFYFSVILSILTIA) form a helical membrane-spanning segment. The Cytoplasmic segment spans residues 74-119 (CFKIHYVSSPKHPNYKNIEKYLKPGWLFGQKVDSADFQYSAFRENM). Residues 120 to 140 (PILLLVIIVYNFLWRLVKLVF) form a helical membrane-spanning segment. The Extracellular portion of the chain corresponds to 141-159 (TKNTNDELAIKNNYRLCFS). The helical transmembrane segment at 160–180 (LLFALLVYGTGVIYVLTIALI) threads the bilayer. The Cytoplasmic portion of the chain corresponds to 181–191 (NYLISKSLKNS). A helical membrane pass occupies residues 192-212 (IFNPLLTWTLDISVVFFKEYF). Topologically, residues 213 to 298 (AYCKFSSLHP…SCLDEDYNLK (86 aa)) are extracellular. The helical transmembrane segment at 299–319 (NFLTYIFYAPLYLAGPIISFN) threads the bilayer. The Cytoplasmic segment spans residues 320–343 (NFMSQMKYPTVSTLKYRNLLYAIR). Residues 344–364 (FLVCVLTMEFLLHYAYVTAIS) traverse the membrane as a helical segment. Over 365 to 373 (KDGNWNQYS) the chain is Extracellular. Residues 374–394 (AVESAMISFIVLFMTWLKLLI) traverse the membrane as a helical segment. Topologically, residues 395–444 (PWRLFRLWSLIDDIEPPENIVRCMCNNYSAVGFWRAWHRSFNRWLIRYIY) are cytoplasmic. The next 2 membrane-spanning stretches (helical) occupy residues 445 to 465 (VPLGGSNHSILNLFIIFTFVA) and 466 to 486 (LWHDISWELFAWGWLIVLFIL). The active site involves H468. Over 487–512 (PERLCCFMSRRTGLTKHPYYRYISGF) the chain is Cytoplasmic. A helical transmembrane segment spans residues 513-533 (GAALNIYFMIICNLIGFAVGI). Residues 534–549 (DGIKNVLVSFFLTLKG) are Extracellular-facing. A helical transmembrane segment spans residues 550–570 (AMSAIAAFIMFFSAVQIMFQI). The Cytoplasmic segment spans residues 571-583 (RVNEEEEGINLRC).

Belongs to the membrane-bound acyltransferase family.

It localises to the cell membrane. The protein resides in the endoplasmic reticulum membrane. It is found in the mitochondrion membrane. Membrane-bound O-acyltransferase involved in the remodeling of glycosylphosphatidylinositol (GPI) anchors. Acts only on GPI-anchored proteins, but not on free GPI lipids. Also involved in lipid metabolism, having profound effects on sphingolipid-sterol-ordered domains integrity and assembly. Involved in cell integrity and apoptosis. This is Membrane-bound O-acyltransferase gup1 (gup1) from Schizosaccharomyces pombe (strain 972 / ATCC 24843) (Fission yeast).